Reading from the N-terminus, the 88-residue chain is Large ribosomal subunit protein bL27 (88 aa).

The interval 1 to 21 (MAHKKGASSSRNGRDSNAKRL) is disordered.

This sequence belongs to the bacterial ribosomal protein bL27 family.

This is Large ribosomal subunit protein bL27 from Thermobifida fusca (strain YX).